The chain runs to 243 residues: Auxin-induced protein AUX28 (243 aa).

The short motif at 8-12 (LRLGL) is the EAR-like (transcriptional repression) element. The tract at residues 54 to 91 (AATTAAAAADPTDKHKTLPKEKTLLPADPAKPPAKTQV) is disordered. Basic and acidic residues predominate over residues 64-76 (PTDKHKTLPKEKT). Over residues 77–89 (LLPADPAKPPAKT) the composition is skewed to low complexity. The PB1 domain maps to 123–223 (ASFVKVSMDG…SCKRLRIMKG (101 aa)).

Belongs to the Aux/IAA family. As to quaternary structure, homodimers and heterodimers.

It localises to the nucleus. Functionally, aux/IAA proteins are short-lived transcriptional factors that function as repressors of early auxin response genes at low auxin concentrations. Repression is thought to result from the interaction with auxin response factors (ARFs), proteins that bind to the auxin-responsive promoter element (AuxRE). Formation of heterodimers with ARF proteins may alter their ability to modulate early auxin response genes expression. The protein is Auxin-induced protein AUX28 (AUX28) of Glycine max (Soybean).